The primary structure comprises 164 residues: MDLITPDFGIIFWQTITLLFVLFILGKFGWKPILQTLKKRETHIEEALKGAEEAKQLLAQLKSEQEKLLEKSNREREKIISDAVATKNDILETAQMEARQLSDKVLKEAREVINTEKEIAFGKLKHEIFLISVQVAEKLLEKELNTENKQEELVRRLIKETHLN.

Residues 8-28 traverse the membrane as a helical segment; sequence FGIIFWQTITLLFVLFILGKF.

It belongs to the ATPase B chain family. As to quaternary structure, F-type ATPases have 2 components, F(1) - the catalytic core - and F(0) - the membrane proton channel. F(1) has five subunits: alpha(3), beta(3), gamma(1), delta(1), epsilon(1). F(0) has three main subunits: a(1), b(2) and c(10-14). The alpha and beta chains form an alternating ring which encloses part of the gamma chain. F(1) is attached to F(0) by a central stalk formed by the gamma and epsilon chains, while a peripheral stalk is formed by the delta and b chains.

It localises to the cell membrane. In terms of biological role, f(1)F(0) ATP synthase produces ATP from ADP in the presence of a proton or sodium gradient. F-type ATPases consist of two structural domains, F(1) containing the extramembraneous catalytic core and F(0) containing the membrane proton channel, linked together by a central stalk and a peripheral stalk. During catalysis, ATP synthesis in the catalytic domain of F(1) is coupled via a rotary mechanism of the central stalk subunits to proton translocation. Functionally, component of the F(0) channel, it forms part of the peripheral stalk, linking F(1) to F(0). In Amoebophilus asiaticus (strain 5a2), this protein is ATP synthase subunit b.